Consider the following 135-residue polypeptide: Retinol-binding protein 5 (135 aa).

It belongs to the calycin superfamily. Fatty-acid binding protein (FABP) family. In terms of tissue distribution, kidney.

The protein resides in the cytoplasm. Its function is as follows. Intracellular transport of retinol. This Bos taurus (Bovine) protein is Retinol-binding protein 5 (RBP5).